Consider the following 149-residue polypeptide: 3-hydroxyacyl-[acyl-carrier-protein] dehydratase FabZ (149 aa).

Histidine 53 is a catalytic residue.

The protein belongs to the thioester dehydratase family. FabZ subfamily.

It is found in the cytoplasm. The enzyme catalyses a (3R)-hydroxyacyl-[ACP] = a (2E)-enoyl-[ACP] + H2O. Functionally, involved in unsaturated fatty acids biosynthesis. Catalyzes the dehydration of short chain beta-hydroxyacyl-ACPs and long chain saturated and unsaturated beta-hydroxyacyl-ACPs. This Neisseria meningitidis serogroup B (strain ATCC BAA-335 / MC58) protein is 3-hydroxyacyl-[acyl-carrier-protein] dehydratase FabZ.